Here is a 332-residue protein sequence, read N- to C-terminus: GTP 3',8-cyclase (332 aa).

The Radical SAM core domain maps to 9-220 (RFARKVDYLR…DQVRERIAER (212 aa)). Residue arginine 18 participates in GTP binding. [4Fe-4S] cluster contacts are provided by cysteine 25 and cysteine 29. Tyrosine 31 contacts S-adenosyl-L-methionine. Residue cysteine 32 participates in [4Fe-4S] cluster binding. Residue arginine 67 coordinates GTP. Glycine 71 is an S-adenosyl-L-methionine binding site. A GTP-binding site is contributed by threonine 98. Serine 122 contacts S-adenosyl-L-methionine. Lysine 159 contributes to the GTP binding site. Residue methionine 193 participates in S-adenosyl-L-methionine binding. [4Fe-4S] cluster is bound by residues cysteine 258 and cysteine 261. Residue 263–265 (RVR) participates in GTP binding. Cysteine 275 contacts [4Fe-4S] cluster.

The protein belongs to the radical SAM superfamily. MoaA family. As to quaternary structure, monomer and homodimer. The cofactor is [4Fe-4S] cluster.

It catalyses the reaction GTP + AH2 + S-adenosyl-L-methionine = (8S)-3',8-cyclo-7,8-dihydroguanosine 5'-triphosphate + 5'-deoxyadenosine + L-methionine + A + H(+). It functions in the pathway cofactor biosynthesis; molybdopterin biosynthesis. Its function is as follows. Catalyzes the cyclization of GTP to (8S)-3',8-cyclo-7,8-dihydroguanosine 5'-triphosphate. In Pseudomonas syringae pv. syringae (strain B728a), this protein is GTP 3',8-cyclase.